A 173-amino-acid polypeptide reads, in one-letter code: Urease accessory protein UreE (173 aa).

A disordered region spans residues 136 to 173; sequence PEGGAYAGSGQDHHDHSHGEHTQGEHTHDEAAEPHHHG. Basic and acidic residues predominate over residues 146–173; it reads QDHHDHSHGEHTQGEHTHDEAAEPHHHG.

The protein belongs to the UreE family.

The protein resides in the cytoplasm. In terms of biological role, involved in urease metallocenter assembly. Binds nickel. Probably functions as a nickel donor during metallocenter assembly. The polypeptide is Urease accessory protein UreE (Beijerinckia indica subsp. indica (strain ATCC 9039 / DSM 1715 / NCIMB 8712)).